The primary structure comprises 396 residues: Putative O-antigen transporter (396 aa).

Helical transmembrane passes span 5 to 25, 32 to 52, 82 to 102, 107 to 127, 137 to 157, 163 to 183, 211 to 231, 286 to 306, 322 to 342, 348 to 368, and 372 to 392; these read ILLLFLVHGANYLFPFIVLPY, IETFADVAKIQAAVMLLSLIV, IVKLLLATICLALGCVHLMYV, LIYPFIISSIYLYGSALFATW, AVVIATTIAKLTGVILTFILV, IVAALFTQNIGMFISGIISIY, FFLSLAATSVYTYFNVILLSF, AIFGVCISAGLVFLGPMLTTI, MFLLPATISISTILSQWMLIP, ILSRIYILGAIVHLLYAFPLV, and GAWGMVISILFTEVLIVLFML.

Belongs to the polysaccharide synthase family.

The protein localises to the cell inner membrane. It participates in bacterial outer membrane biogenesis; LPS O-antigen biosynthesis. Its function is as follows. May be involved in the translocation process of the nascent O-polysaccharide molecules and/or its ligation to lipid A core units. This chain is Putative O-antigen transporter (rfbX), found in Shigella dysenteriae.